Consider the following 2627-residue polypeptide: Telomerase protein component 1 (2627 aa).

4 TEP1 N-terminal repeats span residues methionine 1–proline 30, leucine 31–threonine 60, methionine 61–threonine 90, and methionine 91–serine 120. 2 disordered regions span residues phenylalanine 193–glutamate 214 and arginine 383–proline 402. In terms of domain architecture, TROVE spans valine 223 to glycine 676. A compositionally biased stretch (basic residues) spans arginine 383 to proline 395. Residues arginine 1162–cysteine 1490 enclose the NACHT domain. Glycine 1168–threonine 1175 contributes to the ATP binding site. 19 WD repeats span residues valine 1411–tryptophan 1448, alanine 1674–serine 1713, serine 1716–glutamine 1754, alanine 1757–glutamine 1796, threonine 1798–aspartate 1837, alanine 1840–alanine 1879, alanine 1882–histidine 1921, leucine 1925–glutamine 1964, alanine 1967–leucine 2005, leucine 2008–lysine 2047, glycine 2059–leucine 2098, cysteine 2105–glutamine 2143, glycine 2146–isoleucine 2183, alanine 2185–threonine 2233, glycine 2236–cysteine 2275, arginine 2278–glutamine 2317, proline 2319–proline 2355, glutamate 2368–leucine 2417, and asparagine 2459–threonine 2500. A compositionally biased stretch (polar residues) spans glutamine 2506 to serine 2522. The interval glutamine 2506–arginine 2551 is disordered. WD repeat units follow at residues isoleucine 2553–leucine 2590 and arginine 2592–tryptophan 2626.

Associated component of the telomerase holoenzyme complex. Component of the vault ribonucleoprotein particle, at least composed of MVP, PARP4 and one or more vault RNAs (vRNAs). Binds to VAULTRC1, VAULTRC2 and VAULTRC4/hvg4 vRNAs. As to expression, ubiquitous.

The protein resides in the nucleus. The protein localises to the chromosome. It localises to the telomere. Functionally, component of the telomerase ribonucleoprotein complex that is essential for the replication of chromosome termini. Also a component of the ribonucleoprotein vaults particle, a multi-subunit structure involved in nucleo-cytoplasmic transport. Responsible for the localizing and stabilizing vault RNA (vRNA) association in the vault ribonucleoprotein particle. Binds to TERC. This is Telomerase protein component 1 (TEP1) from Homo sapiens (Human).